A 301-amino-acid chain; its full sequence is Protoheme IX farnesyltransferase 2 (301 aa).

A run of 9 helical transmembrane segments spans residues 29-49, 51-71, 101-121, 123-143, 150-170, 177-197, 223-243, 244-264, and 281-301; these read VVAL…PTAV, VQPL…AAAL, ALIF…VLVN, LTAW…TAYL, NIVI…TAVT, ALLL…ALAI, CILL…LVGM, CGPM…YKAW, and FSIY…YLWS.

This sequence belongs to the UbiA prenyltransferase family. Protoheme IX farnesyltransferase subfamily.

The protein resides in the cell inner membrane. It carries out the reaction heme b + (2E,6E)-farnesyl diphosphate + H2O = Fe(II)-heme o + diphosphate. The protein operates within porphyrin-containing compound metabolism; heme O biosynthesis; heme O from protoheme: step 1/1. Functionally, converts heme B (protoheme IX) to heme O by substitution of the vinyl group on carbon 2 of heme B porphyrin ring with a hydroxyethyl farnesyl side group. The protein is Protoheme IX farnesyltransferase 2 of Shewanella sp. (strain W3-18-1).